Here is a 438-residue protein sequence, read N- to C-terminus: Ammonium transporter Rh type A (438 aa).

The Cytoplasmic portion of the chain corresponds to 1–4; it reads MRFK. Residues 5–25 traverse the membrane as a helical segment; sequence FPLMAISLEVAMIVLFGLFVE. At 26–61 the chain is on the extracellular side; that stretch reads YETPQNASQKNASHQNASQQGNTSSSAKKDQFFQLY. N-linked (GlcNAc...) asparagine glycans are attached at residues asparagine 31, asparagine 36, asparagine 41, and asparagine 47. The chain crosses the membrane as a helical span at residues 62-82; that stretch reads PLFQDVHVMIFVGFGFLMTFL. Topologically, residues 83 to 86 are cytoplasmic; it reads KKYG. Residues 87–107 form a helical membrane-spanning segment; sequence FSGVGFNLFLAALGLQWGTIM. At 108–121 the chain is on the extracellular side; sequence QGLLHSHGKEFHFG. A helical transmembrane segment spans residues 122–142; the sequence is IYNMINADFSTATVLISFGAV. Over 143–148 the chain is Cytoplasmic; it reads LGKTSP. The chain crosses the membrane as a helical span at residues 149 to 169; that stretch reads IQMLIMTILEIAVFAGNEYLV. Over 170-178 the chain is Extracellular; it reads TELFEASDT. A helical membrane pass occupies residues 179-199; sequence GASMTIHAFGAYFGLAVAGVL. Over 200-218 the chain is Cytoplasmic; it reads YRPGLRCEHPNDESVYHSD. A helical membrane pass occupies residues 219–239; sequence LFAMIGTLFLWIFWPSFNSAI. The Extracellular segment spans residues 240–249; the sequence is ADPGDHQYRA. The helical transmembrane segment at 250 to 270 threads the bilayer; it reads IVNTYMSLAACVITAYALSSL. Over 271–278 the chain is Cytoplasmic; that stretch reads VERRGRLD. The chain crosses the membrane as a helical span at residues 279 to 296; that stretch reads MVHIQNATLAGGVAVGTC. Residues 297–300 are Extracellular-facing; it reads ADME. The helical transmembrane segment at 301–321 threads the bilayer; that stretch reads IPLYAAMTIGSIAGIISVLGY. Residues 322–342 lie on the Cytoplasmic side of the membrane; the sequence is KFFSPLLANKLMIHDTCGVHN. A helical membrane pass occupies residues 343–363; the sequence is LHGLPGVFGGLASIVAISWGM. The Extracellular portion of the chain corresponds to 364 to 372; the sequence is STASMAMQA. Residues 373-393 form a helical membrane-spanning segment; it reads AALGSSIGSAIVGGLLTGLIL. Residues 394-438 are Cytoplasmic-facing; that stretch reads KLPIWNQPPDEYCYDDSVSWKVPKFRELDNRFFQHANHNHVEHEV.

It belongs to the ammonium transporter (TC 2.A.49) family. Rh subfamily. As to quaternary structure, homodimer. Heterotrimer; a RHCE monomer interacts with a RHAG homodimer. Component of the ankyrin-1 complex in the erythrocyte, composed of ANK1, RHCE, RHAG, SLC4A1, EPB42, GYPA, GYPB and AQP1. Interacts with GYPB (via the N-terminal); this interaction bridges the (RHAG)2(RHCE) heterotrimer with the SLC4A1 Band 3 I dimer complexed with GYPA. Glycosylated.

The protein resides in the membrane. It catalyses the reaction methylamine(out) = methylamine(in). The catalysed reaction is NH4(+)(in) = NH4(+)(out). The enzyme catalyses CO2(out) = CO2(in). Component of the ankyrin-1 complex, a multiprotein complex involved in the stability and shape of the erythrocyte membrane. Heterotrimer with RHCE (RHAG)2(RHCE), that transports ammonium and its related derivative methylammonium, in both neutral and ionic forms, across the erythrocyte membrane. The transport of NH4(+) is electrogenic and masks the NH3 transport. Also, may act as a CO2 channel. Moreover in erythrocyte, regulates RHD membrane expression and is associated with rhesus blood group antigen expression. The sequence is that of Ammonium transporter Rh type A from Mus musculus (Mouse).